The sequence spans 90 residues: Cell division topological specificity factor (90 aa).

It belongs to the MinE family.

Prevents the cell division inhibition by proteins MinC and MinD at internal division sites while permitting inhibition at polar sites. This ensures cell division at the proper site by restricting the formation of a division septum at the midpoint of the long axis of the cell. This Francisella tularensis subsp. tularensis (strain FSC 198) protein is Cell division topological specificity factor.